The primary structure comprises 211 residues: Beta-crystallin B3 (211 aa).

M1 carries the N-acetylmethionine modification. A2 bears the N-acetylalanine; in Beta-crystallin B3, N-terminally processed mark. An N-terminal arm region spans residues 2 to 23 (AEQHGAPEQAAAGKSHGDLGGS). 2 consecutive Beta/gamma crystallin 'Greek key' domains span residues 24 to 63 (YKVI…QVES) and 64 to 108 (GPWL…RPLN). The interval 109–113 (IDSPH) is connecting peptide. Beta/gamma crystallin 'Greek key' domains lie at 114–155 (HKLH…RAIN) and 156–198 (GTWV…RRIR). Residues 200–211 (QKWHKRGRFPSS) form a C-terminal arm region.

The protein belongs to the beta/gamma-crystallin family. Homo/heterodimer, or complexes of higher-order. The structure of beta-crystallin oligomers seems to be stabilized through interactions between the N-terminal arms.

Crystallins are the dominant structural components of the vertebrate eye lens. This chain is Beta-crystallin B3 (CRYBB3), found in Homo sapiens (Human).